We begin with the raw amino-acid sequence, 332 residues long: L-lactate dehydrogenase A chain (332 aa).

N-acetylalanine is present on alanine 2. An N6-acetyllysine; alternate modification is found at lysine 5. At lysine 5 the chain carries N6-succinyllysine; alternate. N6-acetyllysine is present on lysine 14. Residue 29-57 (GAVGMACAISILMKELADEIALVDVMEDK) coordinates NAD(+). Lysine 57 is subject to N6-acetyllysine; alternate. Lysine 57 is covalently cross-linked (Glycyl lysine isopeptide (Lys-Gly) (interchain with G-Cter in SUMO2); alternate). Lysine 81 carries the N6-acetyllysine modification. Arginine 99 is a binding site for NAD(+). Arginine 106 serves as a coordination point for substrate. The residue at position 118 (lysine 118) is an N6-acetyllysine; alternate. Residue lysine 118 is modified to N6-succinyllysine; alternate. Lysine 126 bears the N6-acetyllysine mark. Asparagine 138 contributes to the NAD(+) binding site. Substrate contacts are provided by asparagine 138 and arginine 169. Histidine 193 (proton acceptor) is an active-site residue. An N6-acetyllysine mark is found at lysine 224 and lysine 232. Residue tyrosine 239 is modified to Phosphotyrosine. The residue at position 243 (lysine 243) is an N6-acetyllysine. Threonine 248 is a substrate binding site. The residue at position 309 (threonine 309) is a Phosphothreonine. Lysine 318 carries the N6-acetyllysine; alternate modification. An N6-succinyllysine; alternate modification is found at lysine 318. Position 322 is a phosphothreonine (threonine 322).

Belongs to the LDH/MDH superfamily. LDH family. In terms of assembly, homotetramer. Interacts with PTEN upstream reading frame protein MP31. ISGylated.

The protein localises to the cytoplasm. The catalysed reaction is (S)-lactate + NAD(+) = pyruvate + NADH + H(+). The protein operates within fermentation; pyruvate fermentation to lactate; (S)-lactate from pyruvate: step 1/1. In terms of biological role, interconverts simultaneously and stereospecifically pyruvate and lactate with concomitant interconversion of NADH and NAD(+). The protein is L-lactate dehydrogenase A chain (LDHA) of Sus scrofa (Pig).